Reading from the N-terminus, the 278-residue chain is Release factor glutamine methyltransferase (278 aa).

S-adenosyl-L-methionine-binding positions include 120–124 (GTGTG), aspartate 143, and asparagine 184. 184–187 (NPPY) provides a ligand contact to substrate.

The protein belongs to the protein N5-glutamine methyltransferase family. PrmC subfamily.

It carries out the reaction L-glutaminyl-[peptide chain release factor] + S-adenosyl-L-methionine = N(5)-methyl-L-glutaminyl-[peptide chain release factor] + S-adenosyl-L-homocysteine + H(+). Functionally, methylates the class 1 translation termination release factors RF1/PrfA and RF2/PrfB on the glutamine residue of the universally conserved GGQ motif. The protein is Release factor glutamine methyltransferase of Deinococcus radiodurans (strain ATCC 13939 / DSM 20539 / JCM 16871 / CCUG 27074 / LMG 4051 / NBRC 15346 / NCIMB 9279 / VKM B-1422 / R1).